The following is a 159-amino-acid chain: ATP synthase subunit b 2 (159 aa).

A helical membrane pass occupies residues 1–21; sequence MDATFWALVALIIFVGILLYM.

This sequence belongs to the ATPase B chain family. In terms of assembly, F-type ATPases have 2 components, F(1) - the catalytic core - and F(0) - the membrane proton channel. F(1) has five subunits: alpha(3), beta(3), gamma(1), delta(1), epsilon(1). F(0) has three main subunits: a(1), b(2) and c(10-14). The alpha and beta chains form an alternating ring which encloses part of the gamma chain. F(1) is attached to F(0) by a central stalk formed by the gamma and epsilon chains, while a peripheral stalk is formed by the delta and b chains.

Its subcellular location is the cell inner membrane. Functionally, f(1)F(0) ATP synthase produces ATP from ADP in the presence of a proton or sodium gradient. F-type ATPases consist of two structural domains, F(1) containing the extramembraneous catalytic core and F(0) containing the membrane proton channel, linked together by a central stalk and a peripheral stalk. During catalysis, ATP synthesis in the catalytic domain of F(1) is coupled via a rotary mechanism of the central stalk subunits to proton translocation. Its function is as follows. Component of the F(0) channel, it forms part of the peripheral stalk, linking F(1) to F(0). In Chelativorans sp. (strain BNC1), this protein is ATP synthase subunit b 2.